Reading from the N-terminus, the 690-residue chain is MLACKFSQYQAFIMDGVKLLGTCALIILLSTTSTVVGRDRITFTPIEDSAGLMFERMYGLRHHTDDRFVFVKKFNFVSVLQELNNIKSKIELYEAQVSTCTNVRQIKQNRSSIIKARIENQLQFLTQLNKNLITYSVESSILSNDVLDNIDLEYDDSGEFDVYDEYEQPSHWSNMTVSDAQALLRNPPKDRVMFLDTVTTSDVSSKYEEYINCIVSNRTVENECMFLANMMNVLNDKLDDAAALAKMLERIVKQTRKNKLNISNTVIDDDTLLTEMKKLTQTLYNQNRVWVVDFNKDMNSYFDLSQAYKLHLYVDLNTVIMFITMPLLKSTAVSFNLYRVMTVPFCRGKMCLLIISGNEYFGITDSKNYYVPVSDNFRQDCQEFTGYNEFLCPETEPIATMNSKVCEIEMFMGRYSDDVDNMCDIRVANYNPKKAYVNTLIDYRKWLYIFPNTTVSVHYYCHDALVEVDTKVSPGVGVMFSTMAQTCSIRITYDVTITVDSRFYVSHSTTYWPKKKFNFNNYIDQMLLEKATTSFIPTVDNFTRPVLLQLPHKFHIKDYTSTPHHFFHQSKIYTNSAAPDEDSQDDSNTTVVIIAIVAAMILFCGLLLFLFCCIKKRCHQSNNVVVQYKNNNEFVTICNNLEDNRAYINLPNEYDSDDMPKPLYPLLGFNDDLLKDDKPVLYPMIIERIK.

The signal sequence occupies residues 1–37; the sequence is MLACKFSQYQAFIMDGVKLLGTCALIILLSTTSTVVG.

The protein localises to the virion. Its function is as follows. Pathogenicity factor that accelerates mortality in the host insect. The sequence is that of Protein AC23 from Autographa californica nuclear polyhedrosis virus (AcMNPV).